Consider the following 294-residue polypeptide: S-methyl-5'-thioadenosine phosphorylase (294 aa).

Residues S16, 58 to 59 (RH), and 91 to 92 (SA) each bind phosphate. M189 is a binding site for substrate. T190 is a binding site for phosphate. Substrate is bound at residue 213 to 215 (DFD).

The protein belongs to the PNP/MTAP phosphorylase family. MTAP subfamily. Homohexamer. Dimer of a homotrimer.

The enzyme catalyses S-methyl-5'-thioadenosine + phosphate = 5-(methylsulfanyl)-alpha-D-ribose 1-phosphate + adenine. It carries out the reaction 5'-deoxyadenosine + phosphate = 5-deoxy-alpha-D-ribose 1-phosphate + adenine. It functions in the pathway amino-acid biosynthesis; L-methionine biosynthesis via salvage pathway; S-methyl-5-thio-alpha-D-ribose 1-phosphate from S-methyl-5'-thioadenosine (phosphorylase route): step 1/1. Catalyzes the reversible phosphorylation of S-methyl-5'-thioadenosine (MTA) to adenine and 5-methylthioribose-1-phosphate. Involved in the breakdown of MTA, a major by-product of polyamine biosynthesis. Responsible for the first step in the methionine salvage pathway after MTA has been generated from S-adenosylmethionine. Has broad substrate specificity with 6-aminopurine nucleosides as preferred substrates. Also catalyzes the phosphorylation of 5'-deoxyadenosine (5'dAdo) to 5-deoxyribose 1-phosphate. Part of a bifunctional DHAP-shunt salvage pathway for SAM by-products. The protein is S-methyl-5'-thioadenosine phosphorylase of Rhodospirillum rubrum (strain ATCC 11170 / ATH 1.1.1 / DSM 467 / LMG 4362 / NCIMB 8255 / S1).